Reading from the N-terminus, the 353-residue chain is Protein RecA (353 aa).

65–72 (GPESSGKT) lines the ATP pocket. Positions 334-345 (DAERAGAEREDN) are enriched in basic and acidic residues. Residues 334-353 (DAERAGAEREDNAAADDENF) are disordered.

Belongs to the RecA family.

The protein resides in the cytoplasm. Its function is as follows. Can catalyze the hydrolysis of ATP in the presence of single-stranded DNA, the ATP-dependent uptake of single-stranded DNA by duplex DNA, and the ATP-dependent hybridization of homologous single-stranded DNAs. It interacts with LexA causing its activation and leading to its autocatalytic cleavage. This Edwardsiella ictaluri (strain 93-146) protein is Protein RecA.